A 209-amino-acid polypeptide reads, in one-letter code: MAAHLEEQQELDNFKYFWKTTGKWLFALLILAALGYLGYTVYQNRAASQNQEAAAVLANIVEKAQNKAPQSEINAELSKLQQSYPHSISAAQATLMAAATEFDAQRYDVAEGHLKWVLSNQKDSLIQALAAQRLGVVLLQQKKYDAALAALDTPVEADFAPLLMETKGDVYAAQEKSQEALKNYGQALEKMPQDSVGRELLQMKLDSLK.

Residues 1–23 are Cytoplasmic-facing; the sequence is MAAHLEEQQELDNFKYFWKTTGK. The chain crosses the membrane as a helical span at residues 24 to 42; it reads WLFALLILAALGYLGYTVY. At 43–209 the chain is on the periplasmic side; the sequence is QNRAASQNQE…LLQMKLDSLK (167 aa). The TPR repeat unit spans residues 161–194; it reads PLLMETKGDVYAAQEKSQEALKNYGQALEKMPQD.

Belongs to the YfgM family. In terms of assembly, interacts with the SecYEG translocon. Forms a complex with PpiD.

The protein localises to the cell inner membrane. Its function is as follows. May mediate protein transfer from the SecYEG translocon to the periplasmic chaperone network via its periplasmic C-terminal region. This chain is Ancillary SecYEG translocon subunit, found in Neisseria gonorrhoeae (strain ATCC 700825 / FA 1090).